Here is a 485-residue protein sequence, read N- to C-terminus: Glutamyl-tRNA(Gln) amidotransferase subunit A (485 aa).

Residues K76 and S151 each act as charge relay system in the active site. S175 functions as the Acyl-ester intermediate in the catalytic mechanism.

This sequence belongs to the amidase family. GatA subfamily. In terms of assembly, heterotrimer of A, B and C subunits.

The catalysed reaction is L-glutamyl-tRNA(Gln) + L-glutamine + ATP + H2O = L-glutaminyl-tRNA(Gln) + L-glutamate + ADP + phosphate + H(+). Its function is as follows. Allows the formation of correctly charged Gln-tRNA(Gln) through the transamidation of misacylated Glu-tRNA(Gln) in organisms which lack glutaminyl-tRNA synthetase. The reaction takes place in the presence of glutamine and ATP through an activated gamma-phospho-Glu-tRNA(Gln). The sequence is that of Glutamyl-tRNA(Gln) amidotransferase subunit A from Thiobacillus denitrificans (strain ATCC 25259 / T1).